A 249-amino-acid chain; its full sequence is Probable transcriptional regulatory protein CYA_2259 (249 aa).

Belongs to the TACO1 family.

Its subcellular location is the cytoplasm. The sequence is that of Probable transcriptional regulatory protein CYA_2259 from Synechococcus sp. (strain JA-3-3Ab) (Cyanobacteria bacterium Yellowstone A-Prime).